Here is a 119-residue protein sequence, read N- to C-terminus: Small ribosomal subunit protein bS16 (119 aa).

This sequence belongs to the bacterial ribosomal protein bS16 family.

This chain is Small ribosomal subunit protein bS16, found in Chlamydia abortus (strain DSM 27085 / S26/3) (Chlamydophila abortus).